The chain runs to 142 residues: Putative pterin-4-alpha-carbinolamine dehydratase (142 aa).

Belongs to the pterin-4-alpha-carbinolamine dehydratase family.

The catalysed reaction is (4aS,6R)-4a-hydroxy-L-erythro-5,6,7,8-tetrahydrobiopterin = (6R)-L-erythro-6,7-dihydrobiopterin + H2O. This is Putative pterin-4-alpha-carbinolamine dehydratase (pcbd-1) from Caenorhabditis elegans.